Consider the following 259-residue polypeptide: Pyridoxine 5'-phosphate synthase (259 aa).

Asparagine 6 is a binding site for 3-amino-2-oxopropyl phosphate. 8-9 (DH) contributes to the 1-deoxy-D-xylulose 5-phosphate binding site. Residue arginine 17 coordinates 3-amino-2-oxopropyl phosphate. Catalysis depends on histidine 42, which acts as the Proton acceptor. Residues arginine 44 and histidine 49 each contribute to the 1-deoxy-D-xylulose 5-phosphate site. Residue glutamate 69 is the Proton acceptor of the active site. A 1-deoxy-D-xylulose 5-phosphate-binding site is contributed by threonine 99. Histidine 212 serves as the catalytic Proton donor. Residues glycine 213 and 234-235 (GH) each bind 3-amino-2-oxopropyl phosphate.

The protein belongs to the PNP synthase family. In terms of assembly, homooctamer; tetramer of dimers.

The protein localises to the cytoplasm. It carries out the reaction 3-amino-2-oxopropyl phosphate + 1-deoxy-D-xylulose 5-phosphate = pyridoxine 5'-phosphate + phosphate + 2 H2O + H(+). It participates in cofactor biosynthesis; pyridoxine 5'-phosphate biosynthesis; pyridoxine 5'-phosphate from D-erythrose 4-phosphate: step 5/5. Functionally, catalyzes the complicated ring closure reaction between the two acyclic compounds 1-deoxy-D-xylulose-5-phosphate (DXP) and 3-amino-2-oxopropyl phosphate (1-amino-acetone-3-phosphate or AAP) to form pyridoxine 5'-phosphate (PNP) and inorganic phosphate. This Nautilia profundicola (strain ATCC BAA-1463 / DSM 18972 / AmH) protein is Pyridoxine 5'-phosphate synthase.